The chain runs to 363 residues: Histidinol-phosphate aminotransferase (363 aa).

K215 carries the post-translational modification N6-(pyridoxal phosphate)lysine.

The protein belongs to the class-II pyridoxal-phosphate-dependent aminotransferase family. Histidinol-phosphate aminotransferase subfamily. In terms of assembly, homodimer. The cofactor is pyridoxal 5'-phosphate.

The catalysed reaction is L-histidinol phosphate + 2-oxoglutarate = 3-(imidazol-4-yl)-2-oxopropyl phosphate + L-glutamate. It functions in the pathway amino-acid biosynthesis; L-histidine biosynthesis; L-histidine from 5-phospho-alpha-D-ribose 1-diphosphate: step 7/9. The polypeptide is Histidinol-phosphate aminotransferase (Buchnera aphidicola subsp. Diuraphis noxia).